Reading from the N-terminus, the 457-residue chain is Oxysterol-binding protein-related protein 3C (457 aa).

2 disordered regions span residues 37–61 and 363–393; these read NEGV…KGRW and QGDL…KGQK. Composition is skewed to basic and acidic residues over residues 47–61 and 370–391; these read GGKE…KGRW and GSEK…ETKG.

Belongs to the OSBP family. As to expression, expressed in roots, leaves, stems and flowers.

Its function is as follows. May be involved in the transport of sterols. The sequence is that of Oxysterol-binding protein-related protein 3C (ORP3C) from Arabidopsis thaliana (Mouse-ear cress).